A 792-amino-acid polypeptide reads, in one-letter code: X-ray radiation resistance-associated protein 1 (792 aa).

LRR repeat units lie at residues 104–125 (DLCT…IYIN), 141–155 (ALKE…IKTI), 164–184 (LLEF…CDLG), 188–209 (HLRV…LAVA), 229–250 (ALET…ASLA), and 254–275 (RLKK…QQVQ). Disordered regions lie at residues 490-517 (AEDL…SPSC), 537-562 (TLSH…KSTE), and 577-601 (IHKD…EVKG). A compositionally biased stretch (basic and acidic residues) spans 549–560 (SPERPSDEDSKS). A coiled-coil region spans residues 723-745 (HKQYLEAKRLLKEFQARYRQLVS).

In terms of tissue distribution, expressed predominantly in testis followed by prostate and ovary. Low levels found in other tissues including peripheral blood leukocytes, spleen, thymus, small intestine and colon. Also expressed in neuroblastoma, glioma, breast, lung, leukemia, renal, ovarian, prostate and colorectal cancer cell lines.

It localises to the cytoplasm. The protein localises to the nucleus. May be involved in the response of cells to X-ray radiation. The sequence is that of X-ray radiation resistance-associated protein 1 from Homo sapiens (Human).